The following is a 527-amino-acid chain: Pentatricopeptide repeat-containing protein At5g41170, mitochondrial (527 aa).

A mitochondrion-targeting transit peptide spans 1 to 35 (MAMRFFQLHRNRLVKGNSGKALSFSRLLDLSFWVR). PPR repeat units lie at residues 36 to 70 (AFCN…RPLP), 71 to 105 (SIID…GVSH), 106 to 140 (DLYT…GFEP), 141 to 175 (DIVT…GIKP), 176 to 210 (DVVM…GIRP), 211 to 245 (DVVM…KIKP), 246 to 280 (DVIT…SIAP), 281 to 315 (NIFT…GCFP), 316 to 350 (DVVA…GLTG), 351 to 385 (NTIT…GVPP), 386 to 420 (NIRT…EMDG), 424 to 458 (NIWT…EMDI), 459 to 493 (GIIT…GVKP), and 494 to 527 (NVVT…DGVS).

It belongs to the PPR family. P subfamily.

The protein resides in the mitochondrion. The polypeptide is Pentatricopeptide repeat-containing protein At5g41170, mitochondrial (Arabidopsis thaliana (Mouse-ear cress)).